A 430-amino-acid polypeptide reads, in one-letter code: UDP-N-acetylglucosamine 1-carboxyvinyltransferase (430 aa).

22–23 (KN) is a binding site for phosphoenolpyruvate. R102 is a UDP-N-acetyl-alpha-D-glucosamine binding site. C126 serves as the catalytic Proton donor. C126 carries the post-translational modification 2-(S-cysteinyl)pyruvic acid O-phosphothioketal. Residues 131–135 (RPVDL), 172–175 (KVSV), D317, and I339 each bind UDP-N-acetyl-alpha-D-glucosamine.

The protein belongs to the EPSP synthase family. MurA subfamily.

The protein resides in the cytoplasm. The catalysed reaction is phosphoenolpyruvate + UDP-N-acetyl-alpha-D-glucosamine = UDP-N-acetyl-3-O-(1-carboxyvinyl)-alpha-D-glucosamine + phosphate. The protein operates within cell wall biogenesis; peptidoglycan biosynthesis. Functionally, cell wall formation. Adds enolpyruvyl to UDP-N-acetylglucosamine. This is UDP-N-acetylglucosamine 1-carboxyvinyltransferase from Rhizobium etli (strain ATCC 51251 / DSM 11541 / JCM 21823 / NBRC 15573 / CFN 42).